The sequence spans 139 residues: Transcription antitermination protein NusB (139 aa).

It belongs to the NusB family.

Involved in transcription antitermination. Required for transcription of ribosomal RNA (rRNA) genes. Binds specifically to the boxA antiterminator sequence of the ribosomal RNA (rrn) operons. The chain is Transcription antitermination protein NusB from Erwinia tasmaniensis (strain DSM 17950 / CFBP 7177 / CIP 109463 / NCPPB 4357 / Et1/99).